Here is a 349-residue protein sequence, read N- to C-terminus: Thylakoid lumenal 29 kDa protein, chloroplastic (349 aa).

The residue at position 155 (S155) is a Phosphoserine.

Belongs to the peroxidase family.

It localises to the plastid. The protein localises to the chloroplast thylakoid lumen. The polypeptide is Thylakoid lumenal 29 kDa protein, chloroplastic (TL29) (Arabidopsis thaliana (Mouse-ear cress)).